Here is an 89-residue protein sequence, read N- to C-terminus: Small ribosomal subunit protein uS15 (89 aa).

This sequence belongs to the universal ribosomal protein uS15 family. As to quaternary structure, part of the 30S ribosomal subunit. Forms a bridge to the 50S subunit in the 70S ribosome, contacting the 23S rRNA.

Its function is as follows. One of the primary rRNA binding proteins, it binds directly to 16S rRNA where it helps nucleate assembly of the platform of the 30S subunit by binding and bridging several RNA helices of the 16S rRNA. Forms an intersubunit bridge (bridge B4) with the 23S rRNA of the 50S subunit in the ribosome. The protein is Small ribosomal subunit protein uS15 of Actinobacillus pleuropneumoniae serotype 5b (strain L20).